The following is a 968-amino-acid chain: RNA polymerase-associated protein RapA (968 aa).

Positions 164–334 (DVGRRHAPRV…FARLRLLDPN (171 aa)) constitute a Helicase ATP-binding domain. 177 to 184 (DEVGLGKT) provides a ligand contact to ATP. A DEAH box motif is present at residues 280–283 (DEAH). Residues 490 to 685 (RVEWLMGYLT…ALKAQLEQGR (196 aa)) form the Helicase C-terminal domain.

This sequence belongs to the SNF2/RAD54 helicase family. RapA subfamily. As to quaternary structure, interacts with the RNAP. Has a higher affinity for the core RNAP than for the holoenzyme. Its ATPase activity is stimulated by binding to RNAP.

Functionally, transcription regulator that activates transcription by stimulating RNA polymerase (RNAP) recycling in case of stress conditions such as supercoiled DNA or high salt concentrations. Probably acts by releasing the RNAP, when it is trapped or immobilized on tightly supercoiled DNA. Does not activate transcription on linear DNA. Probably not involved in DNA repair. This is RNA polymerase-associated protein RapA from Salmonella typhi.